Consider the following 321-residue polypeptide: Urease accessory protein UreD (321 aa).

This sequence belongs to the UreD family. As to quaternary structure, ureD, UreF and UreG form a complex that acts as a GTP-hydrolysis-dependent molecular chaperone, activating the urease apoprotein by helping to assemble the nickel containing metallocenter of UreC. The UreE protein probably delivers the nickel.

The protein localises to the cytoplasm. Functionally, required for maturation of urease via the functional incorporation of the urease nickel metallocenter. The sequence is that of Urease accessory protein UreD from Photorhabdus laumondii subsp. laumondii (strain DSM 15139 / CIP 105565 / TT01) (Photorhabdus luminescens subsp. laumondii).